We begin with the raw amino-acid sequence, 150 residues long: Transcriptional repressor NrdR (150 aa).

A zinc finger spans residues 3 to 34 (CPFCNFEESKVVDSRATDDNTTIRRRRECLNC). Residues 49-139 (VLVVKKDLAR…VYRQFKDINT (91 aa)) enclose the ATP-cone domain.

Belongs to the NrdR family. Zn(2+) is required as a cofactor.

In terms of biological role, negatively regulates transcription of bacterial ribonucleotide reductase nrd genes and operons by binding to NrdR-boxes. The polypeptide is Transcriptional repressor NrdR (Clostridium botulinum (strain Eklund 17B / Type B)).